We begin with the raw amino-acid sequence, 95 residues long: MGRSSKKGPYVDKKLLEKIRKLNETGEKKVIKTWSRASMIIPEMVGHTIAVYNGMKHIPVYITENMIGHRLGEFAPTRRFGGHADKKAKKGELKK.

The protein belongs to the universal ribosomal protein uS19 family.

Functionally, protein S19 forms a complex with S13 that binds strongly to the 16S ribosomal RNA. The sequence is that of Small ribosomal subunit protein uS19 from Thermotoga sp. (strain RQ2).